Here is a 165-residue protein sequence, read N- to C-terminus: MFLRQFSTSPALLKGKVLPELKNAQEISQFLRKSTWNVHDLIPSKEHITNEVDSRVVRKMLRLSGLDENLPEPELNRWAEMLNTHVAFINHVSDLHSSTKGEIGSSVFRLLASDHKPESPLTLKELLRQVDEISDHVSDQRGERGFDTSELRTRINRAKSTAEKE.

Over residues 137 to 153 (VSDQRGERGFDTSELRT) the composition is skewed to basic and acidic residues. Residues 137-165 (VSDQRGERGFDTSELRTRINRAKSTAEKE) are disordered.

The protein belongs to the GatF family. As to quaternary structure, subunit of the heterotrimeric GatFAB amidotransferase (AdT) complex, composed of A, B and F subunits.

It localises to the mitochondrion inner membrane. It catalyses the reaction L-glutamyl-tRNA(Gln) + L-glutamine + ATP + H2O = L-glutaminyl-tRNA(Gln) + L-glutamate + ADP + phosphate + H(+). Allows the formation of correctly charged Gln-tRNA(Gln) through the transamidation of misacylated Glu-tRNA(Gln) in the mitochondria. The reaction takes place in the presence of glutamine and ATP through an activated gamma-phospho-Glu-tRNA(Gln). Required for proper protein synthesis within the mitochondrion. This is Glutamyl-tRNA(Gln) amidotransferase subunit F, mitochondrial from Clavispora lusitaniae (strain ATCC 42720) (Yeast).